Reading from the N-terminus, the 229-residue chain is Potassium/proton antiporter CemA (229 aa).

3 helical membrane passes run 7–27 (FLPL…SLSF), 106–126 (MILH…YSIL), and 189–209 (IISG…KYWI).

This sequence belongs to the CemA family.

Its subcellular location is the plastid. The protein localises to the chloroplast inner membrane. It carries out the reaction K(+)(in) + H(+)(out) = K(+)(out) + H(+)(in). Its function is as follows. Contributes to K(+)/H(+) antiport activity by supporting proton efflux to control proton extrusion and homeostasis in chloroplasts in a light-dependent manner to modulate photosynthesis. Prevents excessive induction of non-photochemical quenching (NPQ) under continuous-light conditions. Indirectly promotes efficient inorganic carbon uptake into chloroplasts. The chain is Potassium/proton antiporter CemA from Eucalyptus globulus subsp. globulus (Tasmanian blue gum).